The sequence spans 109 residues: Ubiquitin-related modifier 1 homolog (109 aa).

Position 109 is a 1-thioglycine (Gly109). Gly109 is covalently cross-linked (Glycyl lysine isopeptide (Gly-Lys) (interchain with K-? in acceptor proteins)).

Belongs to the URM1 family. C-terminal thiocarboxylation occurs in 2 steps, it is first acyl-adenylated (-COAMP) via the hesA/moeB/thiF part of the MOCS3 homolog, then thiocarboxylated (-COSH) via the rhodanese domain of the MOCS3 homolog.

It localises to the cytoplasm. Its pathway is tRNA modification; 5-methoxycarbonylmethyl-2-thiouridine-tRNA biosynthesis. Acts as a sulfur carrier required for 2-thiolation of mcm(5)S(2)U at tRNA wobble positions of cytosolic tRNA(Lys), tRNA(Glu) and tRNA(Gln). Serves as sulfur donor in tRNA 2-thiolation reaction by being thiocarboxylated (-COSH) at its C-terminus by MOCS3. The sulfur is then transferred to tRNA to form 2-thiolation of mcm(5)S(2)U. Also acts as a ubiquitin-like protein (UBL) that is covalently conjugated via an isopeptide bond to lysine residues of target proteins. The thiocarboxylated form serves as substrate for conjugation and oxidative stress specifically induces the formation of UBL-protein conjugates. The chain is Ubiquitin-related modifier 1 homolog from Bombyx mori (Silk moth).